A 275-amino-acid polypeptide reads, in one-letter code: Elongation factor Ts (275 aa).

The interval Thr-76–Val-79 is involved in Mg(2+) ion dislocation from EF-Tu.

This sequence belongs to the EF-Ts family.

Its subcellular location is the cytoplasm. In terms of biological role, associates with the EF-Tu.GDP complex and induces the exchange of GDP to GTP. It remains bound to the aminoacyl-tRNA.EF-Tu.GTP complex up to the GTP hydrolysis stage on the ribosome. This is Elongation factor Ts from Mycolicibacterium paratuberculosis (strain ATCC BAA-968 / K-10) (Mycobacterium paratuberculosis).